Consider the following 396-residue polypeptide: Probable sugar efflux transporter (396 aa).

Transmembrane regions (helical) follow at residues 15-35, 50-70, 81-101, 103-123, 136-156, 170-190, 209-229, 246-266, 275-295, 299-319, 333-353, and 364-384; these read VVTL…PVGL, VGIM…PFML, LICL…SWSF, VLVI…SITA, AQAL…GLPL, FFAI…LLPL, PALM…YTAY, FATA…VIFG, TLVS…LPAA, IHLG…GLGM, VAMA…ALVG, and MIGY…IIIF.

Belongs to the major facilitator superfamily. SotB (TC 2.A.1.2) family.

Its subcellular location is the cell inner membrane. Its function is as follows. Involved in the efflux of sugars. The physiological role may be the reduction of the intracellular concentration of toxic sugars or sugar metabolites. The polypeptide is Probable sugar efflux transporter (Escherichia coli (strain SMS-3-5 / SECEC)).